Here is a 368-residue protein sequence, read N- to C-terminus: Propane 2-monooxygenase, hydroxylase component small subunit (368 aa).

The span at 1-17 (MSAPEKPRERSFPKIEF) shows a compositional bias: basic and acidic residues. The interval 1–32 (MSAPEKPRERSFPKIEFTDSEAGAKEFPSSKS) is disordered.

The protein belongs to the TmoE/XamoE family. The propane 2-monooxygenase multicomponent enzyme system is composed of an electron transfer component and a monooxygenase component interacting with the effector protein MimD. The electron transfer component is composed of a reductase (MimB), and the monooxygenase component is formed by a large subunit (MimA) and a small subunit (MimC). Requires the presence of the chaperonin-like protein MimG to ensure a productive folding, resulting of a soluble MimC, which leads to the active form of MimABCD.

It carries out the reaction propane + NADH + O2 + H(+) = propan-2-ol + NAD(+) + H2O. The catalysed reaction is acetone + NADH + O2 + H(+) = hydroxyacetone + NAD(+) + H2O. It catalyses the reaction butan-2-one + NADH + O2 + H(+) = 1-hydroxy-2-butanone + NAD(+) + H2O. The enzyme catalyses phenol + NADH + O2 + H(+) = hydroquinone + NAD(+) + H2O. Component of the propane 2-monooxygenase multicomponent enzyme system which is involved in the degradation of propane via the O2-dependent hydroxylation of propane. Also involved in the degradation of acetone via the O2-dependent hydroxylation of acetone. Also able to catalyze the oxidation of phenol, methylethylketone (2-butanone), 1-propanol and 2-propanol. In Mycolicibacterium smegmatis (strain ATCC 700084 / mc(2)155) (Mycobacterium smegmatis), this protein is Propane 2-monooxygenase, hydroxylase component small subunit.